The chain runs to 459 residues: Exodeoxyribonuclease 7 large subunit (459 aa).

It belongs to the XseA family. As to quaternary structure, heterooligomer composed of large and small subunits.

It localises to the cytoplasm. The catalysed reaction is Exonucleolytic cleavage in either 5'- to 3'- or 3'- to 5'-direction to yield nucleoside 5'-phosphates.. Its function is as follows. Bidirectionally degrades single-stranded DNA into large acid-insoluble oligonucleotides, which are then degraded further into small acid-soluble oligonucleotides. The protein is Exodeoxyribonuclease 7 large subunit of Pseudomonas aeruginosa (strain LESB58).